A 385-amino-acid polypeptide reads, in one-letter code: 8-amino-7-oxononanoate synthase (385 aa).

Substrate is bound at residue Arg-21. 108–109 (GF) serves as a coordination point for pyridoxal 5'-phosphate. Residue His-133 coordinates substrate. Pyridoxal 5'-phosphate-binding residues include Ser-179, His-207, and Thr-233. Lys-236 bears the N6-(pyridoxal phosphate)lysine mark. Thr-352 contacts substrate.

It belongs to the class-II pyridoxal-phosphate-dependent aminotransferase family. BioF subfamily. As to quaternary structure, homodimer. It depends on pyridoxal 5'-phosphate as a cofactor.

The catalysed reaction is 6-carboxyhexanoyl-[ACP] + L-alanine + H(+) = (8S)-8-amino-7-oxononanoate + holo-[ACP] + CO2. Its pathway is cofactor biosynthesis; biotin biosynthesis. Catalyzes the decarboxylative condensation of pimeloyl-[acyl-carrier protein] and L-alanine to produce 8-amino-7-oxononanoate (AON), [acyl-carrier protein], and carbon dioxide. This Salmonella choleraesuis (strain SC-B67) protein is 8-amino-7-oxononanoate synthase.